We begin with the raw amino-acid sequence, 533 residues long: Death domain-containing ATP nucleosidase (533 aa).

The death domain stretch occupies residues 1–262; that stretch reads MDAAAIISLL…TAAGKEEKVS (262 aa). The disordered stretch occupies residues 184–248; sequence STFVSDDATQ…TQTSTNSFNS (65 aa). The span at 218 to 227 shows a compositional bias: polar residues; sequence PSAQVNQPPT. Positions 236 to 248 are enriched in low complexity; that stretch reads SGSTQTSTNSFNS. Residues 263-533 form a purine nucleoside phosphorylase domain region; the sequence is DDVTKGIKFL…HLDDDRTIHM (271 aa).

It catalyses the reaction ATP + H2O = D-ribose 5-triphosphate + adenine. It carries out the reaction dATP + H2O = 2-deoxyribose 5-triphosphate + adenine. The C-terminal purine nucleoside phosphorylase (PNP) domain cleaves the N-glycosidic bond of ATP, and to a lesser extent dATP, to release adenine and a sugar triphosphate; has weak activity on ADP and AMP and no activity on dADP, dAMP, adenosine, deoxyadenosine or other (d)NTPs. This is Death domain-containing ATP nucleosidase (109585858) from Amphimedon queenslandica (Sponge).